The sequence spans 704 residues: DNA ligase (704 aa).

NAD(+) is bound by residues Asp43–Asp47, Ser92–Leu93, and Glu124. Lys126 (N6-AMP-lysine intermediate) is an active-site residue. Positions 147, 182, 298, and 322 each coordinate NAD(+). Zn(2+) is bound by residues Cys427, Cys430, Cys445, and Cys451. Residues Pro625–Ala704 form the BRCT domain.

It belongs to the NAD-dependent DNA ligase family. LigA subfamily. Mg(2+) is required as a cofactor. Mn(2+) serves as cofactor.

The catalysed reaction is NAD(+) + (deoxyribonucleotide)n-3'-hydroxyl + 5'-phospho-(deoxyribonucleotide)m = (deoxyribonucleotide)n+m + AMP + beta-nicotinamide D-nucleotide.. Functionally, DNA ligase that catalyzes the formation of phosphodiester linkages between 5'-phosphoryl and 3'-hydroxyl groups in double-stranded DNA using NAD as a coenzyme and as the energy source for the reaction. It is essential for DNA replication and repair of damaged DNA. The chain is DNA ligase from Cereibacter sphaeroides (strain ATCC 17025 / ATH 2.4.3) (Rhodobacter sphaeroides).